A 939-amino-acid chain; its full sequence is Translation initiation factor IF-2 (939 aa).

The interval 48-355 is disordered; the sequence is KFAPAPKVEN…KPEKKEKEEE (308 aa). Low complexity predominate over residues 79–93; the sequence is QQNQAPKQPQQGTQN. The span at 114–130 shows a compositional bias: basic and acidic residues; sequence SRDKNSRRDNNNRDGQR. Low complexity predominate over residues 131 to 257; the sequence is DNNGGYRNND…NNDRNNNGGF (127 aa). Basic and acidic residues predominate over residues 287 to 355; that stretch reads RNNDRRDSAP…KPEKKEKEEE (69 aa). The tr-type G domain occupies 440–609; sequence PRPPVVCVMG…LLTAEVNELK (170 aa). A G1 region spans residues 449–456; the sequence is GHVDHGKT. A GTP-binding site is contributed by 449–456; that stretch reads GHVDHGKT. The segment at 474–478 is G2; sequence GITQK. The segment at 495 to 498 is G3; sequence DTPG. Residues 495-499 and 549-552 contribute to the GTP site; these read DTPGH and NKID. The interval 549–552 is G4; sequence NKID. The tract at residues 585 to 587 is G5; the sequence is SAH.

This sequence belongs to the TRAFAC class translation factor GTPase superfamily. Classic translation factor GTPase family. IF-2 subfamily.

The protein localises to the cytoplasm. Its function is as follows. One of the essential components for the initiation of protein synthesis. Protects formylmethionyl-tRNA from spontaneous hydrolysis and promotes its binding to the 30S ribosomal subunits. Also involved in the hydrolysis of GTP during the formation of the 70S ribosomal complex. This Lachnospira eligens (strain ATCC 27750 / DSM 3376 / VPI C15-48 / C15-B4) (Eubacterium eligens) protein is Translation initiation factor IF-2.